A 143-amino-acid chain; its full sequence is Large ribosomal subunit protein uL13 (143 aa).

The protein belongs to the universal ribosomal protein uL13 family. In terms of assembly, part of the 50S ribosomal subunit.

In terms of biological role, this protein is one of the early assembly proteins of the 50S ribosomal subunit, although it is not seen to bind rRNA by itself. It is important during the early stages of 50S assembly. The polypeptide is Large ribosomal subunit protein uL13 (Finegoldia magna (strain ATCC 29328 / DSM 20472 / WAL 2508) (Peptostreptococcus magnus)).